A 315-amino-acid chain; its full sequence is THO complex subunit 3 (315 aa).

WD repeat units follow at residues 18–57, 64–104, 106–145, 189–228, 231–270, and 272–311; these read GHKKKVHSVAWNSNGTKLASGSVDQTARIWNIEPHGHSKA, GHTD…CTQQ, ELSGENINITYKPDGTHVAVGNRDDELTILDVRKFKPLHR, AHTAGCYCIAIDPKGRYFAVGSADSLVSLWDISDMLCLRT, KLEWPVRTISFNYSGEYIASASEDLFIDIANVQTGRTVHQ, and PCRAAMNSVEWNPKYNLLAYAGDDKNPKYNTDEGVFRIFG.

This sequence belongs to the THOC3 family. Component of the THO complex, which is composed of THO1, THO2, THO3, THO5, THO6 and THO7.

The protein localises to the nucleus. Its function is as follows. Acts as a component of the THO subcomplex of the TREX complex which is thought to couple mRNA transcription, processing and nuclear export. Contributes to the integrity of the endogenous trans-acting small interfering RNA (ta-siRNA) pathway. May process or transport a long RNA molecule so that it can be a template for secondary siRNA production. May participate in the trafficking of siRNA precursors to the ARGONAUTE catalytic center. Required for the generation of functional messenger ribonucleoproteins (mRNPs). This is THO complex subunit 3 (THO3) from Arabidopsis thaliana (Mouse-ear cress).